The following is a 272-amino-acid chain: Dermonecrotic toxin LvSicTox-alphaIC1biii (272 aa).

His-5 is a catalytic residue. Residues Glu-25 and Asp-27 each contribute to the Mg(2+) site. His-41 (nucleophile) is an active-site residue. 2 cysteine pairs are disulfide-bonded: Cys-45/Cys-51 and Cys-47/Cys-189. Asp-84 contacts Mg(2+).

This sequence belongs to the arthropod phospholipase D family. Class II subfamily. Mg(2+) is required as a cofactor. As to expression, expressed by the venom gland.

The protein resides in the secreted. The enzyme catalyses an N-(acyl)-sphingosylphosphocholine = an N-(acyl)-sphingosyl-1,3-cyclic phosphate + choline. The catalysed reaction is an N-(acyl)-sphingosylphosphoethanolamine = an N-(acyl)-sphingosyl-1,3-cyclic phosphate + ethanolamine. It catalyses the reaction a 1-acyl-sn-glycero-3-phosphocholine = a 1-acyl-sn-glycero-2,3-cyclic phosphate + choline. It carries out the reaction a 1-acyl-sn-glycero-3-phosphoethanolamine = a 1-acyl-sn-glycero-2,3-cyclic phosphate + ethanolamine. Functionally, dermonecrotic toxins cleave the phosphodiester linkage between the phosphate and headgroup of certain phospholipids (sphingolipid and lysolipid substrates), forming an alcohol (often choline) and a cyclic phosphate. This toxin acts on sphingomyelin (SM). It may also act on ceramide phosphoethanolamine (CPE), lysophosphatidylcholine (LPC) and lysophosphatidylethanolamine (LPE), but not on lysophosphatidylserine (LPS), and lysophosphatidylglycerol (LPG). It acts by transphosphatidylation, releasing exclusively cyclic phosphate products as second products. Induces dermonecrosis, hemolysis, increased vascular permeability, edema, inflammatory response, and platelet aggregation. The protein is Dermonecrotic toxin LvSicTox-alphaIC1biii of Loxosceles variegata (Recluse spider).